Consider the following 453-residue polypeptide: MTTDTIVAQATAPGRGGVGIIRVSGDLASNVAMAVLGHIPKTRYADYCDFKEDSGEVIDQGIALFFKGPNSFTGEDVLELQGHGGQIVLDMLIKRVMEVDGLRIAKPGEFSEQAFMNDKLDLTQAEAIADLIDATSEQAAKSALNSLQGEFSTQVHDLVEKVTNLRLYVEAAIDFPDEEVDFLSDGKIAASLNGIIGKLDGVQASAKQGSIIREGMKVVIAGRPNAGKSSLLNALAGKESAIVTEIAGTTRDVLREHIHLDGMPLHIIDTAGLRDTADTVEKIGIERAWDEIRTADRVLFMVDGTTTPAVDPHEIWPDFIDRLPNNLGVTVVRNKADLTGEDLAITTEAGHSVYRISAKTGLGVDDLKQHLKSLMGYQSNLEGGFIARRRHLEALDLASSHLLLGKEQLEVYQAGELLAEELRMCQMALSEITGKFTSDDLLGKIFSSFCIGK.

Residues arginine 22, glutamate 79, and lysine 119 each contribute to the (6S)-5-formyl-5,6,7,8-tetrahydrofolate site. The region spanning 215–376 (GMKVVIAGRP…LKQHLKSLMG (162 aa)) is the TrmE-type G domain. K(+) is bound at residue asparagine 225. Residues 225 to 230 (NAGKSS), 244 to 250 (TEIAGTT), 269 to 272 (DTAG), and 334 to 337 (NKAD) each bind GTP. Serine 229 contacts Mg(2+). Residues threonine 244, isoleucine 246, and threonine 249 each coordinate K(+). Threonine 250 contacts Mg(2+). Lysine 453 is a binding site for (6S)-5-formyl-5,6,7,8-tetrahydrofolate.

This sequence belongs to the TRAFAC class TrmE-Era-EngA-EngB-Septin-like GTPase superfamily. TrmE GTPase family. Homodimer. Heterotetramer of two MnmE and two MnmG subunits. K(+) is required as a cofactor.

The protein resides in the cytoplasm. In terms of biological role, exhibits a very high intrinsic GTPase hydrolysis rate. Involved in the addition of a carboxymethylaminomethyl (cmnm) group at the wobble position (U34) of certain tRNAs, forming tRNA-cmnm(5)s(2)U34. This is tRNA modification GTPase MnmE from Shewanella halifaxensis (strain HAW-EB4).